The chain runs to 242 residues: DnaJ homolog subfamily B member 3 (242 aa).

A J domain is found at 1–69 (MANYYEVLGV…KKRDVYDRYG (69 aa)).

In terms of tissue distribution, testis specific.

Its function is as follows. May operate as a co-chaperone of the male germ cell- and haploid stage-specific Hsp70 proteins. In Macaca fuscata fuscata (Japanese macaque), this protein is DnaJ homolog subfamily B member 3 (DNAJB3).